We begin with the raw amino-acid sequence, 260 residues long: Ribonuclease PH (260 aa).

Phosphate contacts are provided by residues Arg87 and 125–127 (GTR). Residues 232–260 (LAAPPAAGPPAPERAGAGSGSGGKGTGSR) are disordered. Residues 248-260 (AGSGSGGKGTGSR) show a composition bias toward gly residues.

Belongs to the RNase PH family. As to quaternary structure, homohexameric ring arranged as a trimer of dimers.

It catalyses the reaction tRNA(n+1) + phosphate = tRNA(n) + a ribonucleoside 5'-diphosphate. In terms of biological role, phosphorolytic 3'-5' exoribonuclease that plays an important role in tRNA 3'-end maturation. Removes nucleotide residues following the 3'-CCA terminus of tRNAs; can also add nucleotides to the ends of RNA molecules by using nucleoside diphosphates as substrates, but this may not be physiologically important. Probably plays a role in initiation of 16S rRNA degradation (leading to ribosome degradation) during starvation. This is Ribonuclease PH from Parafrankia sp. (strain EAN1pec).